Reading from the N-terminus, the 376-residue chain is Chaperone protein DnaJ (376 aa).

The 68-residue stretch at 5-72 (DFYEVLGVPK…QKRAAYDQYG (68 aa)) folds into the J domain. The CR-type zinc finger occupies 136–214 (GKEAQIRIPS…CHGQGRVKKQ (79 aa)). Zn(2+)-binding residues include cysteine 149, cysteine 152, cysteine 166, cysteine 169, cysteine 188, cysteine 191, cysteine 202, and cysteine 205. CXXCXGXG motif repeat units lie at residues 149–156 (CETCHGSG), 166–173 (CGTCQGSG), 188–195 (CPHCRGTG), and 202–209 (CTACHGQG). Disordered regions lie at residues 227-246 (DGMR…GGPP) and 352-376 (SLKK…SFFS). A compositionally biased stretch (gly residues) spans 237–246 (GEPGTNGGPP). Positions 367-376 (WTDRLKSFFS) are enriched in basic and acidic residues.

Belongs to the DnaJ family. In terms of assembly, homodimer. It depends on Zn(2+) as a cofactor.

It is found in the cytoplasm. In terms of biological role, participates actively in the response to hyperosmotic and heat shock by preventing the aggregation of stress-denatured proteins and by disaggregating proteins, also in an autonomous, DnaK-independent fashion. Unfolded proteins bind initially to DnaJ; upon interaction with the DnaJ-bound protein, DnaK hydrolyzes its bound ATP, resulting in the formation of a stable complex. GrpE releases ADP from DnaK; ATP binding to DnaK triggers the release of the substrate protein, thus completing the reaction cycle. Several rounds of ATP-dependent interactions between DnaJ, DnaK and GrpE are required for fully efficient folding. Also involved, together with DnaK and GrpE, in the DNA replication of plasmids through activation of initiation proteins. This chain is Chaperone protein DnaJ, found in Acidovorax sp. (strain JS42).